A 364-amino-acid polypeptide reads, in one-letter code: Ribosomal RNA large subunit methyltransferase F (364 aa).

The disordered stretch occupies residues 1-28; that stretch reads MTNKRKSAKPLEPAKRTPKLRTKKSRDL.

This sequence belongs to the methyltransferase superfamily. METTL16/RlmF family.

The protein resides in the cytoplasm. It catalyses the reaction adenosine(1618) in 23S rRNA + S-adenosyl-L-methionine = N(6)-methyladenosine(1618) in 23S rRNA + S-adenosyl-L-homocysteine + H(+). In terms of biological role, specifically methylates the adenine in position 1618 of 23S rRNA. The chain is Ribosomal RNA large subunit methyltransferase F from Vibrio vulnificus (strain YJ016).